The chain runs to 345 residues: Dihydroorotase (345 aa).

The Zn(2+) site is built by His13 and His15. Substrate is bound by residues His15 to Arg17 and Asn41. Zn(2+) is bound by residues Lys100, His137, and His175. Residue Lys100 is modified to N6-carboxylysine. His137 lines the substrate pocket. Leu220 lines the substrate pocket. Asp248 provides a ligand contact to Zn(2+). Residue Asp248 is part of the active site. Substrate is bound by residues His252 and Ala264.

Belongs to the metallo-dependent hydrolases superfamily. DHOase family. Class II DHOase subfamily. Homodimer. Zn(2+) is required as a cofactor.

It carries out the reaction (S)-dihydroorotate + H2O = N-carbamoyl-L-aspartate + H(+). It participates in pyrimidine metabolism; UMP biosynthesis via de novo pathway; (S)-dihydroorotate from bicarbonate: step 3/3. Its function is as follows. Catalyzes the reversible cyclization of carbamoyl aspartate to dihydroorotate. The polypeptide is Dihydroorotase (Laribacter hongkongensis (strain HLHK9)).